Here is a 172-residue protein sequence, read N- to C-terminus: Protein sym-1 (172 aa).

Helical transmembrane passes span 13–33 (PLLT…VAAQ), 52–72 (MVLY…RFLQ), 94–114 (GLFA…LEGT), 128–148 (LSTN…VVPL), and 152–172 (VLFV…LNGQ).

The protein belongs to the peroxisomal membrane protein PXMP2/4 family.

It localises to the mitochondrion inner membrane. In terms of biological role, may be involved in cellular response to stress. Required to maintain mitochondrial DNA (mtDNA) integrity and stability. This is Protein sym-1 (sym-1) from Neurospora crassa (strain ATCC 24698 / 74-OR23-1A / CBS 708.71 / DSM 1257 / FGSC 987).